A 521-amino-acid polypeptide reads, in one-letter code: Probable protein kinase UbiB (521 aa).

The region spanning 119-497 (SFEREPVASA…QKLTNRLLQA (379 aa)) is the Protein kinase domain. ATP is bound by residues 125–133 (VASASIAQV) and K151. D286 functions as the Proton acceptor in the catalytic mechanism. The helical transmembrane segment at 496–516 (QAIVSAGIGFVIALILLQLVV) threads the bilayer.

It belongs to the ABC1 family. UbiB subfamily.

It localises to the cell inner membrane. Its pathway is cofactor biosynthesis; ubiquinone biosynthesis [regulation]. Functionally, is probably a protein kinase regulator of UbiI activity which is involved in aerobic coenzyme Q (ubiquinone) biosynthesis. The chain is Probable protein kinase UbiB from Delftia acidovorans (strain DSM 14801 / SPH-1).